The sequence spans 126 residues: Large ribosomal subunit protein bL17 (126 aa).

The protein belongs to the bacterial ribosomal protein bL17 family. Part of the 50S ribosomal subunit. Contacts protein L32.

In Limosilactobacillus fermentum (strain NBRC 3956 / LMG 18251) (Lactobacillus fermentum), this protein is Large ribosomal subunit protein bL17.